We begin with the raw amino-acid sequence, 149 residues long: D-aminoacyl-tRNA deacylase (149 aa).

Residues 137-138 (GP) carry the Gly-cisPro motif, important for rejection of L-amino acids motif.

Belongs to the DTD family. As to quaternary structure, homodimer.

It localises to the cytoplasm. The catalysed reaction is glycyl-tRNA(Ala) + H2O = tRNA(Ala) + glycine + H(+). It catalyses the reaction a D-aminoacyl-tRNA + H2O = a tRNA + a D-alpha-amino acid + H(+). Its function is as follows. An aminoacyl-tRNA editing enzyme that deacylates mischarged D-aminoacyl-tRNAs. Also deacylates mischarged glycyl-tRNA(Ala), protecting cells against glycine mischarging by AlaRS. Acts via tRNA-based rather than protein-based catalysis; rejects L-amino acids rather than detecting D-amino acids in the active site. By recycling D-aminoacyl-tRNA to D-amino acids and free tRNA molecules, this enzyme counteracts the toxicity associated with the formation of D-aminoacyl-tRNA entities in vivo and helps enforce protein L-homochirality. The sequence is that of D-aminoacyl-tRNA deacylase from Caldicellulosiruptor bescii (strain ATCC BAA-1888 / DSM 6725 / KCTC 15123 / Z-1320) (Anaerocellum thermophilum).